We begin with the raw amino-acid sequence, 428 residues long: MSTVVIIGAQWGDEGKGKITDFLAEKAEIIVRYQGGNNAGHTVVVDDAEFKLHLIPSGILHPEKLCVIGNGVVIDPQVLKQELDSLAERGVKTGRLCVSQRSHIIMPYHRKMDAVEEEQKGEGKIGTTKRGIGPTYTDKASRVGIRVVDLIDKEEFPKLLKNNIECKNEIFEKLYNTKGFEYEEVLKEYQGYAEMLEPMTEDVSVLVHNAIKEGKNVLFEGAQGTLLDLDHGTYPYVTSSHPTAAAACLGSGVGPTKINRALGIVKAYTTRVGEGPFPTELNDGLGEEIRKNGNEYGTTTGRPRRCGWFDAVIVRYAARISGLDSLAITKLDVLSGLPVIKLCSGYRYKGEIIREFPASLKELAKCEPVYEDFPGWSEDISNVTRYEDLPENAKRYLERIVELTEVKISLISVGVKRSQTIILEDLFN.

GTP contacts are provided by residues 12 to 18 (GDEGKGK) and 40 to 42 (GHT). Residue D13 is the Proton acceptor of the active site. Mg(2+) contacts are provided by D13 and G40. IMP contacts are provided by residues 13 to 16 (DEGK), 38 to 41 (NAGH), T128, R142, Q223, T238, and R302. Catalysis depends on H41, which acts as the Proton donor. Residue 298-304 (TTTGRPR) participates in substrate binding. GTP contacts are provided by residues R304, 330-332 (KLD), and 412-414 (SVG).

The protein belongs to the adenylosuccinate synthetase family. In terms of assembly, homodimer. The cofactor is Mg(2+).

The protein localises to the cytoplasm. It catalyses the reaction IMP + L-aspartate + GTP = N(6)-(1,2-dicarboxyethyl)-AMP + GDP + phosphate + 2 H(+). Its pathway is purine metabolism; AMP biosynthesis via de novo pathway; AMP from IMP: step 1/2. In terms of biological role, plays an important role in the de novo pathway of purine nucleotide biosynthesis. Catalyzes the first committed step in the biosynthesis of AMP from IMP. The sequence is that of Adenylosuccinate synthetase from Desulforamulus reducens (strain ATCC BAA-1160 / DSM 100696 / MI-1) (Desulfotomaculum reducens).